Consider the following 217-residue polypeptide: Serine acetyltransferase (217 aa).

This sequence belongs to the transferase hexapeptide repeat family.

The protein resides in the cytoplasm. It catalyses the reaction L-serine + acetyl-CoA = O-acetyl-L-serine + CoA. Its pathway is amino-acid biosynthesis; L-cysteine biosynthesis; L-cysteine from L-serine: step 1/2. Its activity is regulated as follows. Inhibited by cysteine. Its function is as follows. Catalyzes the acetylation of serine by acetyl-CoA to produce O-acetylserine (OAS). The chain is Serine acetyltransferase (cysE) from Bacillus subtilis (strain 168).